The following is a 458-amino-acid chain: Na(+)/H(+) antiporter NhaA (458 aa).

The next 12 helical transmembrane spans lie at 27–47, 78–98, 114–134, 143–163, 172–192, 201–221, 222–242, 249–269, 316–336, 346–366, 388–408, and 421–441; these read FLHV…AALI, LHFW…GMEI, ILPI…YLSF, GWAV…ALLG, VILL…IAFF, GLAI…IGLA, SAWL…ITGV, VILG…PLTI, PWVA…VSFA, FLVV…GIIT, ILLI…VSML, and IGVL…GLIY.

Belongs to the NhaA Na(+)/H(+) (TC 2.A.33) antiporter family.

The protein resides in the cell inner membrane. It catalyses the reaction Na(+)(in) + 2 H(+)(out) = Na(+)(out) + 2 H(+)(in). In terms of biological role, na(+)/H(+) antiporter that extrudes sodium in exchange for external protons. This Bartonella quintana (strain Toulouse) (Rochalimaea quintana) protein is Na(+)/H(+) antiporter NhaA.